Consider the following 322-residue polypeptide: Beta-ketoacyl-[acyl-carrier-protein] synthase III (322 aa).

Active-site residues include cysteine 113 and histidine 249. An ACP-binding region spans residues 250–254 (QANLR). Asparagine 279 is an active-site residue.

Belongs to the thiolase-like superfamily. FabH family. Homodimer.

Its subcellular location is the cytoplasm. The enzyme catalyses malonyl-[ACP] + acetyl-CoA + H(+) = 3-oxobutanoyl-[ACP] + CO2 + CoA. Its pathway is lipid metabolism; fatty acid biosynthesis. In terms of biological role, catalyzes the condensation reaction of fatty acid synthesis by the addition to an acyl acceptor of two carbons from malonyl-ACP. Catalyzes the first condensation reaction which initiates fatty acid synthesis and may therefore play a role in governing the total rate of fatty acid production. Possesses both acetoacetyl-ACP synthase and acetyl transacylase activities. Its substrate specificity determines the biosynthesis of branched-chain and/or straight-chain of fatty acids. The protein is Beta-ketoacyl-[acyl-carrier-protein] synthase III of Marinobacter nauticus (strain ATCC 700491 / DSM 11845 / VT8) (Marinobacter aquaeolei).